A 256-amino-acid polypeptide reads, in one-letter code: Protein FixA (256 aa).

It belongs to the ETF beta-subunit/FixA family. As to quaternary structure, heterodimer of FixA and FixB.

It functions in the pathway amine and polyamine metabolism; carnitine metabolism. Required for anaerobic carnitine reduction. May bring reductant to CaiA. This is Protein FixA from Escherichia coli O139:H28 (strain E24377A / ETEC).